The following is a 269-amino-acid chain: Tryptophan synthase alpha chain (269 aa).

Residues Glu-49 and Asp-60 each act as proton acceptor in the active site.

It belongs to the TrpA family. As to quaternary structure, tetramer of two alpha and two beta chains.

The catalysed reaction is (1S,2R)-1-C-(indol-3-yl)glycerol 3-phosphate + L-serine = D-glyceraldehyde 3-phosphate + L-tryptophan + H2O. The protein operates within amino-acid biosynthesis; L-tryptophan biosynthesis; L-tryptophan from chorismate: step 5/5. In terms of biological role, the alpha subunit is responsible for the aldol cleavage of indoleglycerol phosphate to indole and glyceraldehyde 3-phosphate. The protein is Tryptophan synthase alpha chain of Proteus mirabilis (strain HI4320).